The following is a 194-amino-acid chain: Putative L,D-transpeptidase YciB (194 aa).

Positions 1-19 (MKLSLFIIAVLMPVILLSA) are cleaved as a signal peptide. Cys-20 carries N-palmitoyl cysteine lipidation. Cys-20 carries the S-diacylglycerol cysteine lipid modification. A L,D-TPase catalytic domain is found at 68–194 (VWIDVNVKEQ…IPEHTKVVIS (127 aa)). His-144 functions as the Proton donor/acceptor in the catalytic mechanism. The Nucleophile role is filled by Cys-170.

It belongs to the YkuD family.

It is found in the cell membrane. The protein operates within cell wall biogenesis; peptidoglycan biosynthesis. The sequence is that of Putative L,D-transpeptidase YciB (yciB) from Bacillus subtilis (strain 168).